We begin with the raw amino-acid sequence, 386 residues long: Patatin group M-3 (386 aa).

The first 23 residues, 1 to 23 (MATTKSFLILFFMILATTSSTCA), serve as a signal peptide directing secretion. The PNPLA domain occupies 32–229 (LSIDGGGIKG…TVGDPALLSL (198 aa)). Positions 36–41 (GGGIKG) match the GXGXXG motif. A GXSXG motif is present at residues 75-79 (GTSTG). S77 serves as the catalytic Nucleophile. A glycan (N-linked (GlcNAc...) asparagine) is linked at N115. D215 acts as the Proton acceptor in catalysis. A DGA/G motif is present at residues 215–217 (DGG). Positions 321–384 (ENALTGTTTE…DRKKLRANKA (64 aa)) form a coiled coil.

The protein belongs to the patatin family. Tuber.

Its subcellular location is the vacuole. Probable lipolytic acyl hydrolase (LAH), an activity which is thought to be involved in the response of tubers to pathogens. The polypeptide is Patatin group M-3 (Solanum tuberosum (Potato)).